Here is a 145-residue protein sequence, read N- to C-terminus: Chaperonin GroEL (145 aa).

The protein belongs to the chaperonin (HSP60) family. As to quaternary structure, forms a cylinder of 14 subunits composed of two heptameric rings stacked back-to-back. Interacts with the co-chaperonin GroES.

The protein localises to the cytoplasm. The catalysed reaction is ATP + H2O + a folded polypeptide = ADP + phosphate + an unfolded polypeptide.. Functionally, together with its co-chaperonin GroES, plays an essential role in assisting protein folding. The GroEL-GroES system forms a nano-cage that allows encapsulation of the non-native substrate proteins and provides a physical environment optimized to promote and accelerate protein folding. The protein is Chaperonin GroEL of Thermus thermophilus.